The primary structure comprises 197 residues: Small ribosomal subunit protein uS4c (197 aa).

Residues 85-161 (MRLDNILFRL…TGKELANHLN (77 aa)) enclose the S4 RNA-binding domain.

Belongs to the universal ribosomal protein uS4 family. In terms of assembly, part of the 30S ribosomal subunit. Contacts protein S5. The interaction surface between S4 and S5 is involved in control of translational fidelity.

The protein localises to the plastid. One of the primary rRNA binding proteins, it binds directly to 16S rRNA where it nucleates assembly of the body of the 30S subunit. Functionally, with S5 and S12 plays an important role in translational accuracy. The sequence is that of Small ribosomal subunit protein uS4c (rps4) from Cuscuta obtusiflora (Peruvian dodder).